Reading from the N-terminus, the 82-residue chain is Large ribosomal subunit protein bL27 (82 aa).

The disordered stretch occupies residues 1–20 (MATKKAGGSSSNGRDSIGKR).

Belongs to the bacterial ribosomal protein bL27 family.

The chain is Large ribosomal subunit protein bL27 from Neorickettsia sennetsu (strain ATCC VR-367 / Miyayama) (Ehrlichia sennetsu).